The sequence spans 232 residues: Transcriptional regulatory protein CpxR (232 aa).

The 113-residue stretch at 3–115 (KILLVDDDRE…ELVARIRAIL (113 aa)) folds into the Response regulatory domain. Residue D51 is modified to 4-aspartylphosphate. A DNA-binding region (ompR/PhoB-type) is located at residues 131–230 (SPTLEVDALS…LRGRGYLMVS (100 aa)).

Interacts with cognate sensor kinase CpxA. In terms of processing, phosphorylated by CpxA.

The protein resides in the cytoplasm. Its activity is regulated as follows. The two-component system is activated by envelope stress such as overexpression of some (misfolded) periplasmic proteins. Functionally, response regulator member of the two-component regulatory system CpxA/CpxR which responds to envelope stress response by activating or, in some cases, repressing expression of downstream genes. Binds to the promoter regions of various genes in vitro, including ompC, cpxP, ryhB and mrkA and, when CpxR is phosphorylated, pecO. Represses expression of the major pilin of type 3 fimbriae MrkA as well as that of type 1 fimbriae FimA. Repression of expression of MrkA appears to be indirect, mediated by activation of the iron homeostasis regulator RyhB. The chain is Transcriptional regulatory protein CpxR from Klebsiella pneumoniae subsp. pneumoniae (strain HS11286).